Reading from the N-terminus, the 335-residue chain is Pro-cathepsin H (335 aa).

The first 22 residues, 1-22, serve as a signal peptide directing secretion; sequence MWAVLPLLCAGAWLLGAPACGA. A propeptide spans 23–97 (activation peptide); that stretch reads AELAANSLEK…DELKRKYLWS (75 aa). N-linked (GlcNAc...) asparagine glycans are attached at residues Asn72 and Asn101. 4 disulfide bridges follow: Cys102–Cys327, Cys138–Cys181, Cys172–Cys214, and Cys272–Cys322. A propeptide spanning residues 106–115 is cleaved from the precursor; it reads KSNYLRGTGP. Cys141 is an active-site residue. A glycan (N-linked (GlcNAc...) asparagine) is linked at Asn230. Residues His281 and Asn301 contribute to the active site.

The protein belongs to the peptidase C1 family. Composed of a mini chain and a large chain. The large chain may be split into heavy and light chain. All chains are held together by disulfide bonds.

The protein localises to the lysosome. It carries out the reaction Hydrolysis of proteins, acting as an aminopeptidase (notably, cleaving Arg-|-Xaa bonds) as well as an endopeptidase.. Its function is as follows. Important for the overall degradation of proteins in lysosomes. The polypeptide is Pro-cathepsin H (CTSH) (Bos taurus (Bovine)).